The chain runs to 1063 residues: Integrin alpha-8 (1063 aa).

Residues 1–38 (MSPGASRGPRGSQAPLIAPLCCAAAALGMLLWSPACQA) form the signal peptide. Residues 39–1012 (FNLDVEKLTV…TPNVSFSIPL (974 aa)) are Extracellular-facing. FG-GAP repeat units lie at residues 44-105 (EKLT…GSAQ), 122-183 (NGTK…AYAE), 188-240 (RNSN…IANY), 253-306 (KQTE…STDM), 307-372 (TFIQ…LLFR), 373-431 (DPQI…GLNT), and 435-498 (QVLQ…LHPM). N81 is a glycosylation site (N-linked (GlcNAc...) asparagine). C96 and C106 form a disulfide bridge. A glycan (N-linked (GlcNAc...) asparagine) is linked at N122. A disulfide bridge connects residues C150 and C171. A glycan (N-linked (GlcNAc...) asparagine) is linked at N177. C187 and C200 are joined by a disulfide. N-linked (GlcNAc...) asparagine glycosylation is present at N239. E275, T277, D279, and E283 together coordinate Ca(2+). N302 and N311 each carry an N-linked (GlcNAc...) asparagine glycan. D329, N331, D333, L335, D337, D395, N397, D399, Y401, and D403 together coordinate Ca(2+). A Cell attachment site motif is present at residues 455–457 (RGD). Ca(2+) contacts are provided by D459, D461, N463, Y465, and D467. An N-linked (GlcNAc...) asparagine glycan is attached at N504. Disulfide bonds link C507–C518 and C524–C580. N601 and N605 each carry an N-linked (GlcNAc...) asparagine glycan. Intrachain disulfides connect C641/C647 and C713/C726. N719, N737, N753, N780, N896, and N923 each carry an N-linked (GlcNAc...) asparagine glycan. 2 cysteine pairs are disulfide-bonded: C867-C924 and C929-C934. An N-linked (GlcNAc...) asparagine glycan is attached at N1005. The chain crosses the membrane as a helical span at residues 1013-1033 (WVIILAILLGLLVLAILTLAL). Residues 1034–1063 (WKCGFFDRARPPQEDMTDREQLTNDKTPEA) are Cytoplasmic-facing.

The protein belongs to the integrin alpha chain family. In terms of assembly, heterodimer of an alpha and a beta subunit. The alpha subunit is composed of a heavy and a light chain linked by a disulfide bond. Alpha-8 associates with beta-1. As to expression, expressed in mesenchymal cells, including alveolar myofibroblasts, kidney mesangial cells and hepatic stellar cells and vascular and visceral smooth muscle (at protein level).

It localises to the membrane. It is found in the cell membrane. In terms of biological role, integrin alpha-8/beta-1 functions in the genesis of kidney and probably of other organs by regulating the recruitment of mesenchymal cells into epithelial structures. It recognizes the sequence R-G-D in a wide array of ligands including TNC, FN1, SPP1 TGFB1, TGFB3 and VTN. NPNT is probably its functional ligand in kidney genesis. Neuronal receptor for TNC it mediates cell-cell interactions and regulates neurite outgrowth of sensory and motor neurons. The sequence is that of Integrin alpha-8 (ITGA8) from Homo sapiens (Human).